Reading from the N-terminus, the 376-residue chain is Inactive CLIP domain-containing serine protease A28 (376 aa).

A signal peptide spans Met1–Gly19. Positions Glu24–Gln80 constitute a Clip domain. 3 disulfides stabilise this stretch: Cys28/Cys78, Cys33/Cys71, and Cys39/Cys79. Asn41 carries N-linked (GlcNAc...) asparagine glycosylation. The segment at Pro85 to Thr106 is disordered. The region spanning Asn114–Val364 is the Peptidase S1 domain. Asn125 and Asn279 each carry an N-linked (GlcNAc...) asparagine glycan. 3 disulfides stabilise this stretch: Cys251–Cys321, Cys280–Cys301, and Cys311–Cys340. Asn369 carries an N-linked (GlcNAc...) asparagine glycan.

Belongs to the peptidase S1 family. CLIP subfamily. In terms of assembly, may form a heterodimer of a light chain and a heavy chain; disulfide-linked. Post-translationally, secreted as a full-length protein. Proteolytically cleaved into two chains which probably remain covalently linked. Cleavage is induced by fungus B.bassiana and Gram-positive or Gram-negative bacteria infection.

It is found in the secreted. Its function is as follows. Inactive serine protease which plays an essential role in the innate immune response against bacteria, fungi and protozoa infection by activating the melanization cascade. In the melanization cascade, acts downstream of TEP1, SPCLIP1 and CLIPA8 to promote CLIPC9 proteolytic cleavage. In the susceptible strain G3, appears to be dispensable for parasite P.berghei ookinete elimination which occurs by lysis. Required for the melanization of Gram-positive and Gram-negative bacteria. Required for the melanization of fungus B.bassiana. The protein is Inactive CLIP domain-containing serine protease A28 of Anopheles gambiae (African malaria mosquito).